A 461-amino-acid chain; its full sequence is Putative 2,3-dihydroxypropane-1-sulfonate exporter (461 aa).

The Cytoplasmic portion of the chain corresponds to 1–20 (MSHITTEDPATLRLPFKEKL). Residues 21–41 (SYGIGDLASNILLDIGTLYLL) traverse the membrane as a helical segment. Residues 42–47 (KFYTDV) are Periplasmic-facing. The chain crosses the membrane as a helical span at residues 48 to 68 (LGLPGTYGGIIFLISKFFTAF). The Cytoplasmic portion of the chain corresponds to 69-92 (TDMGTGIMLDSRRKIGPKGKFRPF). A helical membrane pass occupies residues 93–113 (ILYASFPVTLLAIANFVGTPF). At 114–123 (DVTGKTVMAT) the chain is on the periplasmic side. A helical transmembrane segment spans residues 124-144 (ILFMLYGLFFSMMNCSYGAMV). Residues 145-162 (PAITKNPNERASLAAWRQ) lie on the Cytoplasmic side of the membrane. The chain crosses the membrane as a helical span at residues 163–183 (GGATLGLLLCTVGFVPVMNLI). Topologically, residues 184–188 (EGNQQ) are periplasmic. A helical membrane pass occupies residues 189-209 (LGYIFAATLFSLFGLLFMWIC). At 210–243 (YSGVKERYVETQPANPAQKPGLLQSFRAIAGNRP) the chain is on the cytoplasmic side. Residues 244–264 (LFILCIANLCTLGAFNVKLAI) form a helical membrane-spanning segment. Residues 265-276 (QVYYTQYVLNDP) are Periplasmic-facing. A helical membrane pass occupies residues 277 to 297 (ILLSYMGFFSMGCIFIGVFLM). Over 298-308 (PASVRRFGKKK) the chain is Cytoplasmic. The chain crosses the membrane as a helical span at residues 309-329 (VYIGGLLIWVLGDLLNYFFGG). Residue Gly330 is a topological domain, periplasmic. A helical membrane pass occupies residues 331 to 351 (SVSFVAFSCLAFFGSAFVNSL). The Cytoplasmic portion of the chain corresponds to 352-387 (NWALVSDTVEYGEWRTGVRSEGTVYTGFTFFRKVSQ). The chain crosses the membrane as a helical span at residues 388–408 (ALAGFFPGWMLTQIGYVPNVA). Residues 409–419 (QADHTIEGLRQ) lie on the Periplasmic side of the membrane. A helical membrane pass occupies residues 420–440 (LIFIYPSALAVVTIVAMGCFY). At 441 to 461 (SLNEKMYVRIVEEIEARKRTA) the chain is on the cytoplasmic side.

Belongs to the sodium:galactoside symporter (TC 2.A.2) family.

The protein localises to the cell inner membrane. Functionally, could be involved in the export of 2,3-dihydroxypropane-1-sulfonate (DHPS). In Escherichia coli (strain K12), this protein is Putative 2,3-dihydroxypropane-1-sulfonate exporter (yihP).